The chain runs to 410 residues: Adenosine receptor A2a (410 aa).

The Extracellular portion of the chain corresponds to 1–4 (MGSS). The helical transmembrane segment at 5-29 (VYIMVELAIAVLAILGNVLVCWAVW) threads the bilayer. At 30–39 (INSNLQNVTN) the chain is on the cytoplasmic side. A helical transmembrane segment spans residues 40–63 (FFVVSLAAADIAVGVLAIPFAITI). Residues 64–74 (STGFCAACHGC) are Extracellular-facing. 3 disulfide bridges follow: C68–C154, C71–C143, and C74–C161. The helical transmembrane segment at 75 to 97 (LFFACFVLVLTQSSIFSLLAIAI) threads the bilayer. At 98–117 (DRYIAIRIPLRYNGLVTGMR) the chain is on the cytoplasmic side. A helical membrane pass occupies residues 118–140 (AKGIIAICWVLSFAIGLTPMLGW). Residues 141 to 168 (NNCSQKDENSTKTCGEGRVTCLFEDVVP) are Extracellular-facing. 2 N-linked (GlcNAc...) asparagine glycosylation sites follow: N142 and N149. Residue E164 coordinates adenosine. The chain crosses the membrane as a helical span at residues 169–193 (MNYMVYYNFFAFVLLPLLLMLAIYL). At 194–229 (RIFLAARRQLKQMESQPLPGERTRSTLQKEVHAAKS) the chain is on the cytoplasmic side. The helical transmembrane segment at 230–253 (LAIIVGLFALCWLPLHIINCFTFF) threads the bilayer. An adenosine-binding site is contributed by N248. Residues C254 and C257 are joined by a disulfide bond. At 254 to 261 (CSTCQHAP) the chain is on the extracellular side. The helical transmembrane segment at 262-285 (PWLMYLAIILSHSNSVVNPFIYAY) threads the bilayer. Adenosine is bound by residues S272 and H273. The Cytoplasmic portion of the chain corresponds to 286–410 (RIREFRQTFR…ASWSSEFAPS (125 aa)). Residues 322-410 (HSTEGEQVSL…ASWSSEFAPS (89 aa)) are interaction with GAS2L2. Residues 342 to 410 (ANGSAPHSGR…ASWSSEFAPS (69 aa)) form a disordered region. The span at 377 to 389 (TQEHQEGQEHPGL) shows a compositional bias: basic and acidic residues. The segment covering 401–410 (ASWSSEFAPS) has biased composition (polar residues).

This sequence belongs to the G-protein coupled receptor 1 family. Interacts (via cytoplasmic C-terminal domain) with USP4; the interaction is direct. May interact with DRD4. Interacts with NECAB2. Interacts (via cytoplasmic C-terminal domain) with GAS2L2; interaction enhances receptor-mediated adenylyl cyclase activity. Ubiquitinated. Deubiquitinated by USP4; leading to stabilization and expression at the cell surface.

It localises to the cell membrane. In terms of biological role, receptor for adenosine. The activity of this receptor is mediated by G proteins which activate adenylyl cyclase. In Mus musculus (Mouse), this protein is Adenosine receptor A2a (Adora2a).